Consider the following 309-residue polypeptide: Cutinase (309 aa).

Residues 1-47 (MSALTSQPTSSGSSEKIPRLRGWRAKAAGVVLAALALTTGVAAPAPA) form the signal peptide. The active-site Nucleophile is the Ser178. Residues Asp224 and His256 each act as charge relay system in the active site. Cys289 and Cys305 are disulfide-bonded.

This sequence belongs to the AB hydrolase superfamily.

The protein localises to the secreted. The catalysed reaction is a carboxylic ester + H2O = an alcohol + a carboxylate + H(+). It catalyses the reaction a triacylglycerol + H2O = a diacylglycerol + a fatty acid + H(+). The enzyme catalyses 1,2,3-tri-(9Z-octadecenoyl)-glycerol + H2O = di-(9Z)-octadecenoylglycerol + (9Z)-octadecenoate + H(+). It carries out the reaction (6-hydroxyhexanoyl)(n) + H2O = (6-hydroxyhexanoyl)(n-1) + 6-hydroxyhexanoate + H(+). The catalysed reaction is cutin + H2O = cutin monomers.. With respect to regulation, no effect on activity by SDS or chelating agents ethylenediaminetetraacetic acid (EDTA) or sodium citrate. No effect on activity by metal ions Ag(+), Ba(2+), Ca(2+), Co(2+), Cu(2+), Mn(2+), Ni(2+), Pb(2+) or Zn(2+). Activated by 1 mM digitonin and sodium deoxycholate, and reducing agents 1 mM 1,4-dithiothreitol, beta-mercaptoethanol and ascorbic acid. Activated by benzene, n-hexane, p-xylene and toluene. Activated by Fe(3+). Inhibited slightly by 1 mM of different chain length fatty acids, and only marginally by 6.0 M urea. Inhibited strongly with chemical modification by reagents phenyl methyl sulfonylfluorid (PMSF), 1-ethyl-3-(3-dimethylaminopropyl) carbodiimide (EDAC), diethylpyrocarbonate (DEPC) and N-bromosuccinimide (NBS). Inhibited by pyridine, DMSO, t-butanol and dodecane. Inhibited by Li(+), Hg(2+) and Mg(2+). No inhibition with chemical modification by reagents N-acetylimidazole (NAI), citraconic anhydride (CA), iodoacetate (IA) and phenylglyoxal (PG). Functionally, catalyzes the hydrolysis of cutin, a polyester that forms the structure of plant cuticle. Shows esterase activity towards p-nitrophenol-linked aliphatic esters (pNP-aliphatic esters). Has a preference for medium chain length (C-4 to C-12) fatty acid esters. Active with p-nitrophenyl palmitate (p-NPP) as substrate. Hydrolyzes triacylglycerol substrates non-specifically with a preference for long, unsaturated fatty acyl chains with the highest activity for triolein. Substrates with cis-9 unsaturation are preferred over the saturated triacylglycerols. Hydrolyzes a wide range of natural oils, especially olive oil, with relatively high activity. Capable of catalyzing synthesis of the flavor ester isoamyl acetate by esterification of isoamyl alcohol using acetic acid as an acyl donor. Degrades synthetic aliphatic polyesters, namely poly(1,4-butylene succinate) extended with 1,6-diisocyanatohexane (PBSc-D) and poly(epsilon-caprolactone) (PCL) plastics. Does not degrade poly(lactic acid) (PLA) nor aromatic poly(ethylene terephthalate) (PET), the most abundant polyester plastic in the world. The polypeptide is Cutinase (Amycolatopsis mediterranei (strain S699) (Nocardia mediterranei)).